Consider the following 271-residue polypeptide: Proteasome inhibitor PI31 subunit (271 aa).

Ala-2 carries the post-translational modification N-acetylalanine. Residues 2–150 (AGLEVLFASA…PIHEQWEKAR (149 aa)) are important for homodimerization and interaction with FBXO7. Residues Ser-153 and Ser-189 each carry the phosphoserine modification. At Arg-205 the chain carries Omega-N-methylarginine. Position 219 is an asymmetric dimethylarginine (Arg-219). Residues 226–271 (SGLPNRLPPGAVPPGARFDPFGPIGTSPSGPNPDHLPPPGYDDMYL) form a disordered region. Arg-231 bears the Omega-N-methylarginine mark. Position 252 is a phosphoserine (Ser-252). Residues 255–265 (GPNPDHLPPPG) show a composition bias toward pro residues.

The protein belongs to the proteasome inhibitor PI31 family. In terms of assembly, monomer and homodimer. Interacts with FBXO7.

Its subcellular location is the cytoplasm. The protein resides in the endoplasmic reticulum. In terms of biological role, plays an important role in control of proteasome function. Inhibits the hydrolysis of protein and peptide substrates by the 20S proteasome. Also inhibits the activation of the proteasome by the proteasome regulatory proteins PA700 and PA28. The chain is Proteasome inhibitor PI31 subunit (Psmf1) from Mus musculus (Mouse).